Here is a 372-residue protein sequence, read N- to C-terminus: Spermidine/putrescine import ATP-binding protein PotA (372 aa).

The 239-residue stretch at 12 to 250 (VSIRSVRKVY…PRNRFVADFI (239 aa)) folds into the ABC transporter domain. Position 48-55 (48-55 (GPSGCGKT)) interacts with ATP.

The protein belongs to the ABC transporter superfamily. Spermidine/putrescine importer (TC 3.A.1.11.1) family. In terms of assembly, the complex is composed of two ATP-binding proteins (PotA), two transmembrane proteins (PotB and PotC) and a solute-binding protein (PotD).

Its subcellular location is the cell inner membrane. The enzyme catalyses ATP + H2O + polyamine-[polyamine-binding protein]Side 1 = ADP + phosphate + polyamineSide 2 + [polyamine-binding protein]Side 1.. In terms of biological role, part of the ABC transporter complex PotABCD involved in spermidine/putrescine import. Responsible for energy coupling to the transport system. The polypeptide is Spermidine/putrescine import ATP-binding protein PotA (Pseudomonas fluorescens (strain ATCC BAA-477 / NRRL B-23932 / Pf-5)).